The chain runs to 401 residues: MSIILGIETSCDETGVGIVSGSTVLANEVASSSLRHKPFGGVIPEIAARAHLEYLPNLLELALETAQLCIKDIDGIAVTAGPGLVTSLSVGVSAAKALGLSTGTPVYGVNHLVGHAVSAFLDDYTNDGLGVIHRRDSIGSNGIENDASSTHSHTHTTQVNRHSNLCVYTPPRRVLRDVCKYMHVRDSVVLLASGGHSCLLKIHNNKISLLGETLDDAAGEAFDKIARLMGLQYPGGPAIEMLASSGNPNAVEFPRALLTHFEEHNRYSFSFSGLKTAVGRVVERIKSNPAHSIPKIEDIAASFQEAVADVLTAKTVAAALASDVDLIVMGGGVAANNRIREMLCERAKIHGLDVKIPPIALCTDNGAMIAAAGSWLMQLGYNPSHSRFSPVSIMPLTQMVV.

Fe cation is bound by residues H111 and H115. Substrate is bound by residues 191–195, D223, G236, and N336; that span reads LASGG. D364 is a binding site for Fe cation.

This sequence belongs to the KAE1 / TsaD family. Requires Fe(2+) as cofactor.

It is found in the cytoplasm. The enzyme catalyses L-threonylcarbamoyladenylate + adenosine(37) in tRNA = N(6)-L-threonylcarbamoyladenosine(37) in tRNA + AMP + H(+). Its function is as follows. Required for the formation of a threonylcarbamoyl group on adenosine at position 37 (t(6)A37) in tRNAs that read codons beginning with adenine. Is involved in the transfer of the threonylcarbamoyl moiety of threonylcarbamoyl-AMP (TC-AMP) to the N6 group of A37, together with TsaE and TsaB. TsaD likely plays a direct catalytic role in this reaction. The chain is tRNA N6-adenosine threonylcarbamoyltransferase from Tropheryma whipplei (strain TW08/27) (Whipple's bacillus).